Consider the following 479-residue polypeptide: Endoglucanase 20 (479 aa).

Residues 1–21 (MGKLLVLMLVGMFLAFESLEA) form the signal peptide. N-linked (GlcNAc...) asparagine glycosylation occurs at N29. The active-site Nucleophile is the D76. The active site involves H398. N442 carries an N-linked (GlcNAc...) asparagine glycan. Catalysis depends on residues D449 and E458.

The protein belongs to the glycosyl hydrolase 9 (cellulase E) family.

The protein localises to the secreted. The enzyme catalyses Endohydrolysis of (1-&gt;4)-beta-D-glucosidic linkages in cellulose, lichenin and cereal beta-D-glucans.. The protein is Endoglucanase 20 of Arabidopsis thaliana (Mouse-ear cress).